Here is a 262-residue protein sequence, read N- to C-terminus: Tetrahydromethanopterin S-methyltransferase subunit C (262 aa).

6 consecutive transmembrane segments (helical) span residues 35–57 (FVPSLAMLIGGLLAAGACVAGAN), 70–92 (GVPSIGMVSLGMGTISALAGVLI), 97–119 (GLPVLATPILAAVIAVVVGFIVG), 140–162 (LSLMGALAILGFCTAFAGGFSAD), 172–194 (GVIALAFIAAGMSILHPFNACIG), and 214–236 (WLIFSIAKLDIVSIVVAAIFWLY).

This sequence belongs to the MtrC family. In terms of assembly, the complex is composed of 8 subunits; MtrA, MtrB, MtrC, MtrD, MtrE, MtrF, MtrG and MtrH.

It localises to the cell membrane. The enzyme catalyses 5-methyl-5,6,7,8-tetrahydromethanopterin + coenzyme M + 2 Na(+)(in) = 5,6,7,8-tetrahydromethanopterin + methyl-coenzyme M + 2 Na(+)(out). The protein operates within one-carbon metabolism; methanogenesis from CO(2); methyl-coenzyme M from 5,10-methylene-5,6,7,8-tetrahydromethanopterin: step 2/2. In terms of biological role, part of a complex that catalyzes the formation of methyl-coenzyme M and tetrahydromethanopterin from coenzyme M and methyl-tetrahydromethanopterin. This is an energy-conserving, sodium-ion translocating step. This chain is Tetrahydromethanopterin S-methyltransferase subunit C, found in Methanococcus maripaludis (strain DSM 14266 / JCM 13030 / NBRC 101832 / S2 / LL).